The primary structure comprises 106 residues: Small ribosomal subunit protein uS10 (106 aa).

Belongs to the universal ribosomal protein uS10 family. Part of the 30S ribosomal subunit.

Involved in the binding of tRNA to the ribosomes. The chain is Small ribosomal subunit protein uS10 from Prochlorococcus marinus (strain MIT 9301).